The following is a 171-amino-acid chain: Co-chaperone protein HscB (171 aa).

The J domain occupies 2 to 74; that stretch reads DYFTLFGLPA…LTRAEYLLSL (73 aa).

The protein belongs to the HscB family. As to quaternary structure, interacts with HscA and stimulates its ATPase activity. Interacts with IscU.

Its function is as follows. Co-chaperone involved in the maturation of iron-sulfur cluster-containing proteins. Seems to help targeting proteins to be folded toward HscA. In Salmonella heidelberg (strain SL476), this protein is Co-chaperone protein HscB.